A 385-amino-acid chain; its full sequence is MTEREQFFRDVNKIVIKIGTSSITRKGCDHTRENCNIDPAFMESIAFQVSELRKQGKEVIIVSSGAIGVGLNELGIAPKPREIPIRQAAAAVGQSMLMQDWSRAFSRYGMKVAQILLTYEFYSDRVTYLNLRNSISTLLEYGVVPIINENDCTCTNEIEAIFGDNDKLSAMVASKIDADLLIILSDIDGLFDRNPKTHIDAKLLTIVKKITPEIESYGGDPTSFKGVGGMRTKIKAAKICSMAGCYVVIANSDVEDVILKIASGEEIGTLFLAERHIQKNRARWIILARASGTVRVDAGAKAAVLGKNSLLPAGVVDVEGTFDRGDVVKLECDGKIFAKGITDYTSEELIKIKGVHTDQIENVLGYSNYNNVIKKENIGILEELN.

Lys17 is an ATP binding site. Substrate is bound by residues Ser64, Asp151, and Asn165. ATP is bound at residue 185–186 (SD). The PUA domain occupies 291–367 (SGTVRVDAGA…DQIENVLGYS (77 aa)).

This sequence belongs to the glutamate 5-kinase family.

Its subcellular location is the cytoplasm. It catalyses the reaction L-glutamate + ATP = L-glutamyl 5-phosphate + ADP. The protein operates within amino-acid biosynthesis; L-proline biosynthesis; L-glutamate 5-semialdehyde from L-glutamate: step 1/2. In terms of biological role, catalyzes the transfer of a phosphate group to glutamate to form L-glutamate 5-phosphate. The chain is Glutamate 5-kinase from Methanosarcina mazei (strain ATCC BAA-159 / DSM 3647 / Goe1 / Go1 / JCM 11833 / OCM 88) (Methanosarcina frisia).